The following is a 176-amino-acid chain: Mediator of RNA polymerase II transcription subunit 11 (176 aa).

A disordered region spans residues 98 to 176 (SRVRELEETK…MGGDSSMSTN (79 aa)). Basic and acidic residues predominate over residues 99–108 (RVRELEETKA). A compositionally biased stretch (low complexity) spans 124-154 (HAAAQQQQQQQQQQQQQQQQMQQAAQQQQQQ).

It belongs to the Mediator complex subunit 11 family. As to quaternary structure, component of the Mediator complex, which may include CDK8, MED4, MED6, MED11, MED14, MED17, MED18, MED20, MED21, MED22, MED27, MED28, MED30 and MED31.

Its subcellular location is the nucleus. Functionally, component of the Mediator complex, a coactivator involved in the regulated transcription of nearly all RNA polymerase II-dependent genes. Mediator functions as a bridge to convey information from gene-specific regulatory proteins to the basal RNA polymerase II transcription machinery. Mediator is recruited to promoters by direct interactions with regulatory proteins and serves as a scaffold for the assembly of a functional pre-initiation complex with RNA polymerase II and the general transcription factors. This chain is Mediator of RNA polymerase II transcription subunit 11 (MED11), found in Drosophila melanogaster (Fruit fly).